We begin with the raw amino-acid sequence, 89 residues long: Small ribosomal subunit protein uS15 (89 aa).

The interval 1–25 is disordered; the sequence is MSLSAEQKGEIVKKHARTASDTGSP.

The protein belongs to the universal ribosomal protein uS15 family. Part of the 30S ribosomal subunit. Forms a bridge to the 50S subunit in the 70S ribosome, contacting the 23S rRNA.

In terms of biological role, one of the primary rRNA binding proteins, it binds directly to 16S rRNA where it helps nucleate assembly of the platform of the 30S subunit by binding and bridging several RNA helices of the 16S rRNA. Functionally, forms an intersubunit bridge (bridge B4) with the 23S rRNA of the 50S subunit in the ribosome. This is Small ribosomal subunit protein uS15 from Alkalilimnicola ehrlichii (strain ATCC BAA-1101 / DSM 17681 / MLHE-1).